Consider the following 545-residue polypeptide: Calcium-dependent protein kinase 6 (545 aa).

Gly-2 is lipidated: N-myristoyl glycine. Residues 34–43 (CSSTSTATSS) show a composition bias toward low complexity. Residues 34–58 (CSSTSTATSSGGRMPIRSHQQRLSS) form a disordered region. The Protein kinase domain occupies 74–332 (YTVGRKLGQG…AHQVLCHPWV (259 aa)). ATP contacts are provided by residues 80–88 (LGQGQFGTT) and Lys-103. Asp-198 acts as the Proton acceptor in catalysis. An autoinhibitory domain region spans residues 338 to 368 (APDRPLAPAVLSRLKQFSAMNRLKKMALRVI). EF-hand domains follow at residues 375-410 (EELA…YGSN), 411-446 (LREA…LNKL), 447-482 (EREE…HNMA), and 486-516 (IDDI…GAID). The Ca(2+) site is built by Asp-388, Asp-390, Ser-392, Glu-399, Asp-424, Asp-426, Ser-428, Thr-430, Glu-435, Asp-460, Asp-462, Ser-464, Tyr-466, Glu-471, Asp-494, Asp-496, Asp-498, Arg-500, and Glu-505. The tract at residues 526–545 (GRPTTATSDDPSPTISSSSR) is disordered. Low complexity predominate over residues 528–545 (PTTATSDDPSPTISSSSR).

This sequence belongs to the protein kinase superfamily. Ser/Thr protein kinase family. CDPK subfamily.

It localises to the membrane. It catalyses the reaction L-seryl-[protein] + ATP = O-phospho-L-seryl-[protein] + ADP + H(+). The catalysed reaction is L-threonyl-[protein] + ATP = O-phospho-L-threonyl-[protein] + ADP + H(+). With respect to regulation, activated by calcium. Autophosphorylation may play an important role in the regulation of the kinase activity. Its function is as follows. May play a role in signal transduction pathways that involve calcium as a second messenger. This chain is Calcium-dependent protein kinase 6, found in Oryza sativa subsp. japonica (Rice).